The sequence spans 281 residues: MRVIETISDLKAIIRTQKNLGRVIGLVPTMGYLHEGHLSLVNMSRQNNDYTVMSIFVNPTQFGPNEDFDRYPRDLERDLKLAEAAGVDVVFAPSVKEMYPDGYKTYVNVEGITEVLCGKSRPGHFRGVTTIVTKLFNIVEPHRAYFGQKDAQQVAVIKKMVKDLNMNVEIITCPIVREEDGLAMSSRNVYLSPEERKSAVILSKSLMEAEELIKKGETDAKKIRKYIIDRIQTEKNAVIDYVEVVNADTLENVDEIKGRVLVALAVKFGSTRLIDNVIVEV.

ATP is bound at residue 30–37 (MGYLHEGH). His-37 functions as the Proton donor in the catalytic mechanism. A (R)-pantoate-binding site is contributed by Gln-61. Residue Gln-61 coordinates beta-alanine. 147 to 150 (GQKD) is an ATP binding site. Position 153 (Gln-153) interacts with (R)-pantoate. ATP is bound by residues Val-176 and 184–187 (MSSR).

Belongs to the pantothenate synthetase family. Homodimer.

It is found in the cytoplasm. It carries out the reaction (R)-pantoate + beta-alanine + ATP = (R)-pantothenate + AMP + diphosphate + H(+). It participates in cofactor biosynthesis; (R)-pantothenate biosynthesis; (R)-pantothenate from (R)-pantoate and beta-alanine: step 1/1. Catalyzes the condensation of pantoate with beta-alanine in an ATP-dependent reaction via a pantoyl-adenylate intermediate. The sequence is that of Pantothenate synthetase from Acetivibrio thermocellus (strain ATCC 27405 / DSM 1237 / JCM 9322 / NBRC 103400 / NCIMB 10682 / NRRL B-4536 / VPI 7372) (Clostridium thermocellum).